The chain runs to 513 residues: MAFSQYISLAPELLLATAIFCLVFWMVRASRTQVPKGLKNPPGPWGLPFIGHMLTVGKNPHLSLTRLSQQYGDVLQIRIGSTPVVVLSGLNTIKQALVRQGDDFKGRPDLYSFTLITNGKSMTFNPDSGPVWAARRRLAQDALKSFSIASDPTSASSCYLEEHVSKEANHLVSKLQKAMAEVGHFEPVSQVVESVANVIGAMCFGKNFPRKSEEMLNIVNNSKDFVENVTSGNAVDFFPVLRYLPNPALKRFKTFNDNFVLFLQKTVQEHYQDFNKNSIQDITSALFKHSENYKDNGGLIPEEKIVNIVNDIFGAGFDTVTTAITWSILLLVTWPNVQRKIHEELDTVVGRDRQPRLSDRPQLPYLEAFILEIYRYTSFVPFTIPHSTTRDTSLNGFHIPKERCIYINQWQVNHDEKQWKDPFVFRPERFLTNNNSAIDKTQSEKVMLFGLGKRRCIGEIPAKWEVFLFLAILLQHLEFSVPPGVKVDLTPNYGLTMKPGTCEHVQAWPRFSK.

A glycan (O-linked (GlcNAc) serine) is linked at serine 68. Phenylalanine 225 contacts substrate. Residue cysteine 456 participates in heme binding.

The protein belongs to the cytochrome P450 family. As to quaternary structure, interacts with PGRMC1; the interaction requires PGRMC1 homodimerization. The cofactor is heme.

Its subcellular location is the endoplasmic reticulum membrane. It is found in the microsome membrane. It catalyses the reaction an organic molecule + reduced [NADPH--hemoprotein reductase] + O2 = an alcohol + oxidized [NADPH--hemoprotein reductase] + H2O + H(+). It carries out the reaction 17beta-estradiol + reduced [NADPH--hemoprotein reductase] + O2 = 2-hydroxy-17beta-estradiol + oxidized [NADPH--hemoprotein reductase] + H2O + H(+). The enzyme catalyses 17beta-estradiol + reduced [NADPH--hemoprotein reductase] + O2 = 4-hydroxy-17beta-estradiol + oxidized [NADPH--hemoprotein reductase] + H2O + H(+). The catalysed reaction is estrone + reduced [NADPH--hemoprotein reductase] + O2 = 2-hydroxyestrone + oxidized [NADPH--hemoprotein reductase] + H2O + H(+). It catalyses the reaction estrone + reduced [NADPH--hemoprotein reductase] + O2 = 4-hydroxyestrone + oxidized [NADPH--hemoprotein reductase] + H2O + H(+). It carries out the reaction cholesterol + reduced [NADPH--hemoprotein reductase] + O2 = 25-hydroxycholesterol + oxidized [NADPH--hemoprotein reductase] + H2O + H(+). The enzyme catalyses all-trans-retinol + reduced [NADPH--hemoprotein reductase] + O2 = all-trans-retinal + oxidized [NADPH--hemoprotein reductase] + 2 H2O + H(+). The catalysed reaction is all-trans-retinal + reduced [NADPH--hemoprotein reductase] + O2 = all-trans-retinoate + oxidized [NADPH--hemoprotein reductase] + H2O + 2 H(+). It catalyses the reaction (5Z,8Z,11Z,14Z)-eicosatetraenoate + reduced [NADPH--hemoprotein reductase] + O2 = (14R,15S)-epoxy-(5Z,8Z,11Z)-eicosatrienoate + oxidized [NADPH--hemoprotein reductase] + H2O + H(+). It carries out the reaction (5Z,8Z,11Z,14Z)-eicosatetraenoate + reduced [NADPH--hemoprotein reductase] + O2 = (14S,15R)-epoxy-(5Z,8Z,11Z)-eicosatrienoate + oxidized [NADPH--hemoprotein reductase] + H2O + H(+). The enzyme catalyses (5Z,8Z,11Z,14Z,17Z)-eicosapentaenoate + reduced [NADPH--hemoprotein reductase] + O2 = (17R,18S)-epoxy-(5Z,8Z,11Z,14Z)-eicosatetraenoate + oxidized [NADPH--hemoprotein reductase] + H2O + H(+). The catalysed reaction is (4Z,7Z,10Z,13Z,16Z,19Z)-docosahexaenoate + reduced [NADPH--hemoprotein reductase] + O2 = (19R,20S)-epoxy-(4Z,7Z,10Z,13Z,16Z)-docosapentaenoate + oxidized [NADPH--hemoprotein reductase] + H2O + H(+). It catalyses the reaction (5S)-hydroperoxy-(6E,8Z,11Z,14Z)-eicosatetraenoate = 5-oxo-(6E,8Z,11Z,14Z)-eicosatetraenoate + H2O. It carries out the reaction (12S)-hydroperoxy-(5Z,8Z,10E,14Z)-eicosatetraenoate = 12-oxo-(5Z,8Z,10E,14Z)-eicosatetraenoate + H2O. The enzyme catalyses (15S)-hydroperoxy-(5Z,8Z,11Z,13E)-eicosatetraenoate = 15-oxo-(5Z,8Z,11Z,13E)-eicosatetraenoate + H2O. The catalysed reaction is (13S)-hydroperoxy-(9Z,11E)-octadecadienoate = 13-oxo-(9Z,11E)-octadecadienoate + H2O. It catalyses the reaction (5Z,8Z,11Z,14Z)-eicosatetraenoate + reduced [NADPH--hemoprotein reductase] + O2 = 13-hydroxy-(5Z,8Z,11Z,14Z)-eicosatetraenoate + oxidized [NADPH--hemoprotein reductase] + H2O + H(+). It carries out the reaction (5Z,8Z,11Z,14Z)-eicosatetraenoate + reduced [NADPH--hemoprotein reductase] + O2 = 19-hydroxy-(5Z,8Z,11Z,14Z)-eicosatetraenoate + oxidized [NADPH--hemoprotein reductase] + H2O + H(+). The enzyme catalyses (9Z,12Z)-octadecadienoate + reduced [NADPH--hemoprotein reductase] + O2 = 11-hydroxy-(9Z,12Z)-octadecadienoate + oxidized [NADPH--hemoprotein reductase] + H2O + H(+). The protein operates within cofactor metabolism; retinol metabolism. It functions in the pathway steroid metabolism; cholesterol metabolism. Its pathway is lipid metabolism; arachidonate metabolism. In terms of biological role, a cytochrome P450 monooxygenase involved in the metabolism of various endogenous substrates, including fatty acids, steroid hormones and vitamins. Mechanistically, uses molecular oxygen inserting one oxygen atom into a substrate, and reducing the second into a water molecule, with two electrons provided by NADPH via cytochrome P450 reductase (NADPH--hemoprotein reductase). Catalyzes the hydroxylation of carbon-hydrogen bonds. Exhibits high catalytic activity for the formation of hydroxyestrogens from estrone (E1) and 17beta-estradiol (E2), namely 2-hydroxy E1 and E2. Metabolizes cholesterol toward 25-hydroxycholesterol, a physiological regulator of cellular cholesterol homeostasis. May act as a major enzyme for all-trans retinoic acid biosynthesis in the liver. Catalyzes two successive oxidative transformation of all-trans retinol to all-trans retinal and then to the active form all-trans retinoic acid. Primarily catalyzes stereoselective epoxidation of the last double bond of polyunsaturated fatty acids (PUFA), displaying a strong preference for the (R,S) stereoisomer. Catalyzes bisallylic hydroxylation and omega-1 hydroxylation of PUFA. May also participate in eicosanoids metabolism by converting hydroperoxide species into oxo metabolites (lipoxygenase-like reaction, NADPH-independent). Plays a role in the oxidative metabolism of xenobiotics. Catalyzes the N-hydroxylation of heterocyclic amines and the O-deethylation of phenacetin. Metabolizes caffeine via N3-demethylation. This chain is Cytochrome P450 1A2 (Cyp1a2), found in Mus musculus (Mouse).